We begin with the raw amino-acid sequence, 363 residues long: NAD(P)H-quinone oxidoreductase subunit 1, chloroplastic (363 aa).

A run of 8 helical transmembrane segments spans residues Phe26 to Val46, Trp96 to Ile116, Ile127 to Val147, Leu175 to Val195, Ile203 to Leu223, Phe253 to Ile273, Gly303 to Leu323, and Phe343 to Leu363.

This sequence belongs to the complex I subunit 1 family. In terms of assembly, NDH is composed of at least 16 different subunits, 5 of which are encoded in the nucleus.

The protein resides in the plastid. It localises to the chloroplast thylakoid membrane. The enzyme catalyses a plastoquinone + NADH + (n+1) H(+)(in) = a plastoquinol + NAD(+) + n H(+)(out). The catalysed reaction is a plastoquinone + NADPH + (n+1) H(+)(in) = a plastoquinol + NADP(+) + n H(+)(out). Its function is as follows. NDH shuttles electrons from NAD(P)H:plastoquinone, via FMN and iron-sulfur (Fe-S) centers, to quinones in the photosynthetic chain and possibly in a chloroplast respiratory chain. The immediate electron acceptor for the enzyme in this species is believed to be plastoquinone. Couples the redox reaction to proton translocation, and thus conserves the redox energy in a proton gradient. This is NAD(P)H-quinone oxidoreductase subunit 1, chloroplastic from Zygnema circumcarinatum (Green alga).